Reading from the N-terminus, the 177-residue chain is Tubulin beta chain (177 aa).

Residues 156 to 177 (YQDATAEEEGEFDEEEGDEEAA) are disordered. Residues 160-177 (TAEEEGEFDEEEGDEEAA) are compositionally biased toward acidic residues.

Belongs to the tubulin family. As to quaternary structure, dimer of alpha and beta chains. A typical microtubule is a hollow water-filled tube with an outer diameter of 25 nm and an inner diameter of 15 nM. Alpha-beta heterodimers associate head-to-tail to form protofilaments running lengthwise along the microtubule wall with the beta-tubulin subunit facing the microtubule plus end conferring a structural polarity. Microtubules usually have 13 protofilaments but different protofilament numbers can be found in some organisms and specialized cells. It depends on Mg(2+) as a cofactor.

The protein resides in the cytoplasm. The protein localises to the cytoskeleton. Tubulin is the major constituent of microtubules, a cylinder consisting of laterally associated linear protofilaments composed of alpha- and beta-tubulin heterodimers. Microtubules grow by the addition of GTP-tubulin dimers to the microtubule end, where a stabilizing cap forms. Below the cap, tubulin dimers are in GDP-bound state, owing to GTPase activity of alpha-tubulin. The chain is Tubulin beta chain from Lytechinus pictus (Painted sea urchin).